The primary structure comprises 253 residues: Imidazole glycerol phosphate synthase subunit HisF (253 aa).

Active-site residues include Asp12 and Asp131.

The protein belongs to the HisA/HisF family. As to quaternary structure, heterodimer of HisH and HisF.

The protein resides in the cytoplasm. The enzyme catalyses 5-[(5-phospho-1-deoxy-D-ribulos-1-ylimino)methylamino]-1-(5-phospho-beta-D-ribosyl)imidazole-4-carboxamide + L-glutamine = D-erythro-1-(imidazol-4-yl)glycerol 3-phosphate + 5-amino-1-(5-phospho-beta-D-ribosyl)imidazole-4-carboxamide + L-glutamate + H(+). Its pathway is amino-acid biosynthesis; L-histidine biosynthesis; L-histidine from 5-phospho-alpha-D-ribose 1-diphosphate: step 5/9. Functionally, IGPS catalyzes the conversion of PRFAR and glutamine to IGP, AICAR and glutamate. The HisF subunit catalyzes the cyclization activity that produces IGP and AICAR from PRFAR using the ammonia provided by the HisH subunit. The sequence is that of Imidazole glycerol phosphate synthase subunit HisF from Corynebacterium urealyticum (strain ATCC 43042 / DSM 7109).